The following is a 156-amino-acid chain: Rhombotin-1 (156 aa).

LIM zinc-binding domains lie at 24-83 (CAGC…RLFG) and 88-147 (CAAC…EGQL).

As to expression, expressed mainly in the central nervous. Low level of expression in other tissues including thymus.

It localises to the nucleus. Its function is as follows. May be involved in gene regulation within neural lineage cells potentially by direct DNA binding or by binding to other transcription factors. In Homo sapiens (Human), this protein is Rhombotin-1 (LMO1).